Here is a 627-residue protein sequence, read N- to C-terminus: Putative ankyrin repeat protein L122 (627 aa).

12 ANK repeats span residues 61 to 94 (KGWTALMIACAMCDKWSSFKTIRLLLKKGADVHI), 98 to 130 (KGRTVLSLMVNIITENKFNIMDLLIDKGADINS), 153 to 186 (HACYVLGKSVDPNLEKNDSKTVRYLLDKGADPNI), 190 to 223 (YGKTVLFYAARMKNQDKAYEISKTLIERGGNANH), 228 to 259 (AETVLIYLCISCSHYSCELIQLLLDNGVDINH), 263 to 296 (IGFTALMCACINIKNPSNFETIKFMLDKGANINL), 300 to 333 (DGFTAFMNIFGNNYFDYIVPVIQIMLDYGADIND), 337 to 370 (NNVTVLMMAVKFAKNDKNMTVINFLLDKGADLEI), 374 to 407 (YDWTALFYACRYSNSSGNNDAVKLLLDYGANVNV), 411 to 444 (LGHTPLIIACQYADNESNIDTVKLLLEYGANPNL), 448 to 480 (DKNTALSVAITWLSKNRYEVVKLLLYYHADSNT), and 491 to 523 (REYNLLVWIVKNIKCNKLDLLMLLIEHGANYSD).

The chain is Putative ankyrin repeat protein L122 from Acanthamoeba polyphaga (Amoeba).